A 445-amino-acid chain; its full sequence is Rab GDP dissociation inhibitor beta (445 aa).

Position 1 is an N-acetylmethionine (M1). Position 57 is an N6-succinyllysine (K57). K112 carries the N6-acetyllysine modification. The residue at position 130 (S130) is a Phosphoserine. An N6-acetyllysine modification is found at K269. S382 carries the phosphoserine modification.

It belongs to the Rab GDI family. In terms of assembly, interacts with RHOH. Interacts with the GDP-bound inactive forms of RAB3A, RAB3B, RAB3C, RAB5A, RAB5B, RAB5C, RAB8A, RAB8B, RAB10, RAB12, RAB35, and RAB43; binds RAB3D to a lesser extent. Interacts with DZIP1; this interaction negatively regulates the interaction of GDI2 with GDP-bound RAB8A. Ubiquitously expressed.

The protein localises to the cytoplasm. It localises to the membrane. Its subcellular location is the golgi apparatus. It is found in the trans-Golgi network. Its function is as follows. GDP-dissociation inhibitor preventing the GDP to GTP exchange of most Rab proteins. By keeping these small GTPases in their inactive GDP-bound form regulates intracellular membrane trafficking. Negatively regulates protein transport to the cilium and ciliogenesis through the inhibition of RAB8A. This Bos taurus (Bovine) protein is Rab GDP dissociation inhibitor beta (GDI2).